The chain runs to 244 residues: Phosphoadenosine 5'-phosphosulfate reductase (244 aa).

Catalysis depends on Cys239, which acts as the Nucleophile; cysteine thiosulfonate intermediate.

The protein belongs to the PAPS reductase family. CysH subfamily.

Its subcellular location is the cytoplasm. It catalyses the reaction [thioredoxin]-disulfide + sulfite + adenosine 3',5'-bisphosphate + 2 H(+) = [thioredoxin]-dithiol + 3'-phosphoadenylyl sulfate. It functions in the pathway sulfur metabolism; hydrogen sulfide biosynthesis; sulfite from sulfate: step 3/3. Functionally, catalyzes the formation of sulfite from phosphoadenosine 5'-phosphosulfate (PAPS) using thioredoxin as an electron donor. The chain is Phosphoadenosine 5'-phosphosulfate reductase from Salmonella typhi.